We begin with the raw amino-acid sequence, 530 residues long: Ubiquitin carboxyl-terminal hydrolase 17-like protein 12 (530 aa).

In terms of domain architecture, USP spans 80–375 (AGLQNMGNTC…QAYVLFYIQK (296 aa)). C89 (nucleophile) is an active-site residue. The active-site Proton acceptor is the H334. 2 stretches are compositionally biased toward basic and acidic residues: residues 382 to 392 (SESVSRGREPR) and 398 to 412 (DTDR…KRDH). Disordered regions lie at residues 382 to 412 (SESV…KRDH) and 477 to 530 (NHHP…LVCQ). Over residues 484–495 (SSLLKLSSTTPT) the composition is skewed to low complexity. Over residues 496–505 (HQESMNTGTL) the composition is skewed to polar residues. A compositionally biased stretch (basic residues) spans 510 to 524 (GRARRSKGKNKHSKR).

It belongs to the peptidase C19 family. USP17 subfamily.

Its subcellular location is the nucleus. It localises to the endoplasmic reticulum. The enzyme catalyses Thiol-dependent hydrolysis of ester, thioester, amide, peptide and isopeptide bonds formed by the C-terminal Gly of ubiquitin (a 76-residue protein attached to proteins as an intracellular targeting signal).. Functionally, deubiquitinating enzyme that removes conjugated ubiquitin from specific proteins to regulate different cellular processes that may include cell proliferation, progression through the cell cycle, apoptosis, cell migration, and the cellular response to viral infection. The protein is Ubiquitin carboxyl-terminal hydrolase 17-like protein 12 (USP17L12) of Homo sapiens (Human).